The primary structure comprises 326 residues: Phosphate acyltransferase (326 aa).

The protein belongs to the PlsX family. Homodimer. Probably interacts with PlsY.

The protein resides in the cytoplasm. The catalysed reaction is a fatty acyl-[ACP] + phosphate = an acyl phosphate + holo-[ACP]. Its pathway is lipid metabolism; phospholipid metabolism. Functionally, catalyzes the reversible formation of acyl-phosphate (acyl-PO(4)) from acyl-[acyl-carrier-protein] (acyl-ACP). This enzyme utilizes acyl-ACP as fatty acyl donor, but not acyl-CoA. The protein is Phosphate acyltransferase of Petrotoga mobilis (strain DSM 10674 / SJ95).